Reading from the N-terminus, the 95-residue chain is uncharacterized protein (95 aa).

Positions 1–12 (MQNFMNNLSGGS) are enriched in low complexity. Residues 1-27 (MQNFMNNLSGGSNKEGGEKSNDFLSSA) are disordered.

This is an uncharacterized protein from Schizosaccharomyces pombe (strain 972 / ATCC 24843) (Fission yeast).